The primary structure comprises 98 residues: Protein translation factor SUI1 homolog (98 aa).

This sequence belongs to the SUI1 family.

This is Protein translation factor SUI1 homolog from Pyrococcus abyssi (strain GE5 / Orsay).